Consider the following 127-residue polypeptide: Large ribosomal subunit protein bL17 (127 aa).

This sequence belongs to the bacterial ribosomal protein bL17 family. In terms of assembly, part of the 50S ribosomal subunit. Contacts protein L32.

The polypeptide is Large ribosomal subunit protein bL17 (Limosilactobacillus reuteri (strain DSM 20016) (Lactobacillus reuteri)).